The sequence spans 254 residues: Sec-independent protein translocase protein TatCy (254 aa).

The next 6 helical transmembrane spans lie at 24 to 44, 67 to 87, 112 to 132, 157 to 177, 187 to 207, and 212 to 232; these read IVALAFVVFFIAGFFLAKPII, LYVFMQFAFIIGIVLTSPVIL, VSILLFLAGLSFSYYILFPFV, FLLQLTIPFGLLFQMPVILMF, MFLAKIRKYAYFTLLVIAALI, and LLSHMMVTVPLLILYEISILI.

The protein belongs to the TatC family. In terms of assembly, forms a complex with TatAy. Two types of complexes exist: one composed of TatAy and TatCy, and another composed only of TatAy.

The protein localises to the cell membrane. Part of the twin-arginine translocation (Tat) system that transports large folded proteins containing a characteristic twin-arginine motif in their signal peptide across membranes. Required for YwbN secretion. This is Sec-independent protein translocase protein TatCy from Bacillus subtilis (strain 168).